Here is a 336-residue protein sequence, read N- to C-terminus: Biotin synthase (336 aa).

Residues 54 to 281 (NAIQLSTLLS…KAMVRLSAGR (228 aa)) enclose the Radical SAM core domain. [4Fe-4S] cluster is bound by residues Cys69, Cys73, and Cys76. [2Fe-2S] cluster-binding residues include Cys113, Cys144, Cys204, and Arg276.

The protein belongs to the radical SAM superfamily. Biotin synthase family. As to quaternary structure, homodimer. The cofactor is [4Fe-4S] cluster. Requires [2Fe-2S] cluster as cofactor.

The catalysed reaction is (4R,5S)-dethiobiotin + (sulfur carrier)-SH + 2 reduced [2Fe-2S]-[ferredoxin] + 2 S-adenosyl-L-methionine = (sulfur carrier)-H + biotin + 2 5'-deoxyadenosine + 2 L-methionine + 2 oxidized [2Fe-2S]-[ferredoxin]. It participates in cofactor biosynthesis; biotin biosynthesis; biotin from 7,8-diaminononanoate: step 2/2. Catalyzes the conversion of dethiobiotin (DTB) to biotin by the insertion of a sulfur atom into dethiobiotin via a radical-based mechanism. The polypeptide is Biotin synthase (Burkholderia pseudomallei (strain 1710b)).